Here is a 382-residue protein sequence, read N- to C-terminus: ATP phosphoribosyltransferase regulatory subunit (382 aa).

It belongs to the class-II aminoacyl-tRNA synthetase family. HisZ subfamily. Heteromultimer composed of HisG and HisZ subunits.

The protein resides in the cytoplasm. The protein operates within amino-acid biosynthesis; L-histidine biosynthesis; L-histidine from 5-phospho-alpha-D-ribose 1-diphosphate: step 1/9. Its function is as follows. Required for the first step of histidine biosynthesis. May allow the feedback regulation of ATP phosphoribosyltransferase activity by histidine. This is ATP phosphoribosyltransferase regulatory subunit from Burkholderia cenocepacia (strain HI2424).